Here is a 380-residue protein sequence, read N- to C-terminus: G-protein coupled receptor (380 aa).

7 helical membrane passes run 26-46 (VISI…YLGI), 60-80 (LVCC…PLWV), 97-117 (FAGM…VIVT), 145-165 (VTIL…ETSI), 184-204 (AALG…HIIL), 220-240 (ILMW…SLSA), and 275-295 (VAML…VPLI). Residues cysteine 95 and cysteine 170 are joined by a disulfide bond. The disordered stretch occupies residues 328–380 (SQSKLLRGEENPNYDYSPKSVRIKPLKSPGGGDNSSLKDEGYDEESQNGFSIG).

This sequence belongs to the G-protein coupled receptor 1 family.

It localises to the host membrane. The chain is G-protein coupled receptor from Elephas maximus (Indian elephant).